The primary structure comprises 185 residues: Threonylcarbamoyl-AMP synthase (185 aa).

One can recognise a YrdC-like domain in the interval 4–185; sequence SWRVQQAARE…LATGEIVRPG (182 aa).

It belongs to the SUA5 family. TsaC subfamily.

The protein localises to the cytoplasm. The enzyme catalyses L-threonine + hydrogencarbonate + ATP = L-threonylcarbamoyladenylate + diphosphate + H2O. Functionally, required for the formation of a threonylcarbamoyl group on adenosine at position 37 (t(6)A37) in tRNAs that read codons beginning with adenine. Catalyzes the conversion of L-threonine, HCO(3)(-)/CO(2) and ATP to give threonylcarbamoyl-AMP (TC-AMP) as the acyladenylate intermediate, with the release of diphosphate. This Pseudomonas putida (strain W619) protein is Threonylcarbamoyl-AMP synthase.